Reading from the N-terminus, the 371-residue chain is RNA polymerase sigma factor SigA (371 aa).

The sigma-70 factor domain-2 stretch occupies residues 137–207 (LAEANLRLVV…TRAIADQART (71 aa)). The Interaction with polymerase core subunit RpoC signature appears at 161–164 (DLIQ). The tract at residues 216–292 (ETINKLVREQ…DEVIENPVDY (77 aa)) is sigma-70 factor domain-3. The interval 305–358 (VLDTLTDREENVLRLRFGLDDGKMRTLEDVGKVFDVTRERIRQIEAKALRKLRH) is sigma-70 factor domain-4. The H-T-H motif DNA-binding region spans 331-350 (LEDVGKVFDVTRERIRQIEA).

It belongs to the sigma-70 factor family. RpoD/SigA subfamily. As to quaternary structure, interacts transiently with the RNA polymerase catalytic core.

The protein resides in the cytoplasm. Its function is as follows. Sigma factors are initiation factors that promote the attachment of RNA polymerase to specific initiation sites and are then released. This sigma factor is the primary sigma factor during exponential growth. The polypeptide is RNA polymerase sigma factor SigA (Streptococcus mutans serotype c (strain ATCC 700610 / UA159)).